We begin with the raw amino-acid sequence, 262 residues long: Short-chain reductase protein NovJ (262 aa).

NADP(+) is bound by residues G23–R26 and D73–V74. S152 provides a ligand contact to substrate. Y164 acts as the Proton acceptor in catalysis. Y164–K168 contacts NADP(+).

It belongs to the short-chain dehydrogenases/reductases (SDR) family. Heterotetramer; the NovJ(2)K(2) heterotetramer is composed of subunits of 2 NovJ and 2 subunits of NovK.

The protein operates within antibiotic biosynthesis; novobiocin biosynthesis. In terms of biological role, catalytic subunit of the NovJ(2)K(2) heterotetramer that catalyzes the NADPH-dependent reduction of the tyrosyl moiety of L-beta-OH-Tyr-S-NovH intermediate to yield the tethered beta-ketotyrosyl-S-NovH in the novobiocin biosynthesis pathway. Novobiocin is an aminocoumarin family antibiotic that targets bacterial DNA gyrases. In Streptomyces niveus (Streptomyces spheroides), this protein is Short-chain reductase protein NovJ (novJ).